Consider the following 636-residue polypeptide: Rik1-associated factor 2 (636 aa).

Component of the Clr4 methyltransferase complex (ClrC) composed of at least clr4, rik1, pcu4, rbx1, raf1 and raf2. The cullin pcu4, rik1, raf1, raf2 and the ring-box protein rbx1 are components of an E3 ubiquitin ligase, whose activity is essential for heterochromatin assembly. Interacts with pcu4.

Its subcellular location is the cytoplasm. The protein resides in the mitochondrion. It localises to the nucleus. The protein localises to the chromosome. Functionally, component of the Clr4 methyltransferase complex (ClrC) which contributes to the establishment of heterochromatin by specifically methylating histone H3 to form H3K9me. ClrC preferentially ubiquitylates H3K14 and ClrC-mediated H3 ubiquitination promotes clr4 methyltransferase activity for the methylation of H3K9. H3K9me represents a specific tag for epigenetic transcriptional repression by recruiting swi6/HP1 to methylated histones which leads to transcriptional silencing within centromeric heterochromatin, telomeric regions and at the silent mating-type loci. Has a role in both mitotic and meiotic chromosome segregation. The chain is Rik1-associated factor 2 (raf2) from Schizosaccharomyces pombe (strain 972 / ATCC 24843) (Fission yeast).